Reading from the N-terminus, the 497-residue chain is Signal recognition particle receptor FtsY (497 aa).

Disordered regions lie at residues 1–63 (MAKE…TEAE) and 79–130 (AESE…EWQA). The segment covering 87-96 (EAEVVAQPEP) has biased composition (low complexity). GTP-binding positions include 300 to 307 (GVNGVGKT), 382 to 386 (DTAGR), and 446 to 449 (TKLD).

It belongs to the GTP-binding SRP family. FtsY subfamily. Part of the signal recognition particle protein translocation system, which is composed of SRP and FtsY. SRP is a ribonucleoprotein composed of Ffh and a 4.5S RNA molecule. Binds to SecY. In terms of processing, proteolytically cleaved. The cleavage may regulate function and subcellular location of FtsY. Full-length FtsY is found primarily associated with the membrane, while cleaved protein is predominantly present in the cytoplasm.

It localises to the cell inner membrane. The protein resides in the cytoplasm. The enzyme catalyses GTP + H2O = GDP + phosphate + H(+). Its activity is regulated as follows. Conformation of the Ffh-FtsY complex and regulation of its GTPase activity are modulated by the 4.5S RNA. Formation of the FfH-FtsY complex leads to a mutual stimulation of both GTPases. Functionally, involved in targeting and insertion of nascent membrane proteins into the cytoplasmic membrane. Acts as a receptor for the complex formed by the signal recognition particle (SRP) and the ribosome-nascent chain (RNC). Interaction with SRP-RNC leads to the transfer of the RNC complex to the Sec translocase for insertion into the membrane, the hydrolysis of GTP by both Ffh and FtsY, and the dissociation of the SRP-FtsY complex into the individual components. This is Signal recognition particle receptor FtsY from Escherichia coli (strain K12).